Consider the following 239-residue polypeptide: Probable replication-associated protein repA2 (239 aa).

The protein belongs to the IncFII RepA family.

Its function is as follows. This protein is essential for plasmid replication; it is involved in copy control functions. This Buchnera aphidicola subsp. Baizongia pistaciae (strain Bp) protein is Probable replication-associated protein repA2 (repA2).